The following is a 271-amino-acid chain: 4-hydroxy-tetrahydrodipicolinate reductase (271 aa).

NAD(+) contacts are provided by residues 12-17 and Glu-38; that span reads GGSGRM. Arg-39 serves as a coordination point for NADP(+). Residues 102-104 and 126-129 each bind NAD(+); these read GTT and APNM. His-159 acts as the Proton donor/acceptor in catalysis. His-160 contacts (S)-2,3,4,5-tetrahydrodipicolinate. The active-site Proton donor is Lys-163. 169–170 is a (S)-2,3,4,5-tetrahydrodipicolinate binding site; that stretch reads GT.

The protein belongs to the DapB family.

The protein resides in the cytoplasm. The catalysed reaction is (S)-2,3,4,5-tetrahydrodipicolinate + NAD(+) + H2O = (2S,4S)-4-hydroxy-2,3,4,5-tetrahydrodipicolinate + NADH + H(+). It carries out the reaction (S)-2,3,4,5-tetrahydrodipicolinate + NADP(+) + H2O = (2S,4S)-4-hydroxy-2,3,4,5-tetrahydrodipicolinate + NADPH + H(+). It functions in the pathway amino-acid biosynthesis; L-lysine biosynthesis via DAP pathway; (S)-tetrahydrodipicolinate from L-aspartate: step 4/4. Its function is as follows. Catalyzes the conversion of 4-hydroxy-tetrahydrodipicolinate (HTPA) to tetrahydrodipicolinate. This Shewanella sediminis (strain HAW-EB3) protein is 4-hydroxy-tetrahydrodipicolinate reductase.